A 562-amino-acid polypeptide reads, in one-letter code: Glycine betaine/proline/choline/ectoine transporter VP1456 (562 aa).

A run of 12 helical transmembrane segments spans residues 68-88 (PVFG…LLVE), 110-130 (FFMW…FSPL), 147-167 (VSWL…FWSV), 203-223 (WGVH…FFAF), 243-263 (AWGW…LFGL), 287-307 (GIGT…LSVV), 322-342 (MIVA…TAMG), 373-393 (WTVF…MFIA), 404-424 (FLFA…SVFG), 456-476 (VLPY…VFFI), 503-523 (IFWA…GGKE), and 531-551 (GVVA…VSLV).

The protein belongs to the BCCT transporter (TC 2.A.15) family.

The protein resides in the cell inner membrane. Its function is as follows. Involved in the uptake of osmoprotectants. Can transport glycine betaine, proline, choline and ectoine. The sequence is that of Glycine betaine/proline/choline/ectoine transporter VP1456 from Vibrio parahaemolyticus serotype O3:K6 (strain RIMD 2210633).